Consider the following 670-residue polypeptide: Extracellular matrix protein 2 (670 aa).

The signal sequence occupies residues 1 to 19 (MKLAVLFCFILLIVLQTDC). The 58-residue stretch at 96–153 (GYCFVKGMIMYNKAVWSPEPCTTCLCSNGRVLCDETECHPKACPYTIKPEGECCPICS) folds into the VWFC domain. The tract at residues 185-270 (SEEDEEIAEG…EEDAIRGDVF (86 aa)) is disordered. Over residues 192–227 (AEGHKEHKKETSVPTKIHGDGERTERKLRPEKEGRS) the composition is skewed to basic and acidic residues. Residues 241 to 263 (ESKEETEREGEEEEEEEEEEEED) show a composition bias toward acidic residues. Residues 266–268 (RGD) carry the Cell attachment site motif. Positions 278 to 315 (PGTPRGRPRLPRSCSLSYRTISCVHADFTEIPPITAPE) constitute an LRRNT domain. LRR repeat units follow at residues 339–359 (NLER…GPKA), 365–386 (KLMR…LPST), 387–407 (LEEL…SLSD), 410–430 (QLVT…DPLA), 436–456 (SLSY…GLPA), 457–478 (STEE…CFNH), 481–501 (KITM…APLA), 507–528 (NLES…LPKS), 529–549 (LLHL…VFGH), 553–573 (GLEY…DLVS), 580–601 (SLRE…IQDM), 603–624 (ALHF…QICN), and 632–655 (ALEH…AFSC). Residue N349 is glycosylated (N-linked (GlcNAc...) asparagine). Residue N420 is glycosylated (N-linked (GlcNAc...) asparagine). N477 carries N-linked (GlcNAc...) asparagine glycosylation.

The protein belongs to the small leucine-rich proteoglycan (SLRP) family. SLRP class I subfamily. In terms of assembly, interacts with numerous extracellular matrix proteins. Interacts with isoform 1 of MSL1. Interacts with isoform 3 of RASSF1.

Its subcellular location is the secreted. It localises to the extracellular space. It is found in the extracellular matrix. Promotes matrix assembly and cell adhesiveness. This Mus musculus (Mouse) protein is Extracellular matrix protein 2 (Ecm2).